A 53-amino-acid polypeptide reads, in one-letter code: UPF0391 membrane protein Bmul_5473/BMULJ_06024 (53 aa).

The next 2 helical transmembrane spans lie at 5–25 (ALIF…GIAA) and 30–50 (IAKI…LLGV).

It belongs to the UPF0391 family.

Its subcellular location is the cell membrane. The sequence is that of UPF0391 membrane protein Bmul_5473/BMULJ_06024 from Burkholderia multivorans (strain ATCC 17616 / 249).